A 1254-amino-acid polypeptide reads, in one-letter code: NPC intracellular cholesterol transporter 1 homolog 1b (1254 aa).

A signal peptide spans 1 to 16; it reads MKVIFATIWLIAGAWS. Residues 17 to 272 lie on the Extracellular side of the membrane; the sequence is QSAEQLGCIW…WKIAGLYGVT (256 aa). Disulfide bonds link C24-C81, C62-C116, C82-C120, C104-C241, C107-C161, C178-C186, C231-C246, and C243-C250. 2 N-linked (GlcNAc...) asparagine glycosylation sites follow: N123 and N132. The helical transmembrane segment at 273 to 293 threads the bilayer; sequence FILALIIACALSFFIFWGAFG. Over 294–325 the chain is Cytoplasmic; sequence KTSAPSVCMPTLFGEFFYHGFRIWGTFCAKHP. A helical transmembrane segment spans residues 326–346; it reads VIVLALCSWAIAGLSFGIRYM. Topologically, residues 347–593 are extracellular; that stretch reads TITTDPVELW…AIVELSEGEV (247 aa). N-linked (GlcNAc...) asparagine glycosylation is present at N389. The cysteines at positions 438 and 454 are disulfide-linked. An N-linked (GlcNAc...) asparagine glycan is attached at N479. The cysteines at positions 491 and 500 are disulfide-linked. The SSD domain maps to 592–757; sequence EVSTVVISYV…ITAFVALMAI (166 aa). Residues 594-614 form a helical membrane-spanning segment; that stretch reads STVVISYVVMFVYVAIALGHI. The Cytoplasmic segment spans residues 615–625; that stretch reads RSCRGFLRESR. Residues 626 to 646 form a helical membrane-spanning segment; the sequence is IMLAIGGIVIVLASVVCSLGF. The Extracellular portion of the chain corresponds to 647–657; sequence WGYLDVTTTML. A helical transmembrane segment spans residues 658 to 678; sequence AIEVIPFLVLAVGVDNIFIMV. Over 679–736 the chain is Cytoplasmic; that stretch reads HTYQRLDHSKFKTTHEAIGEAIGQVGPSILQTAGSEMACFAIGCISDMPAVKTFAMYA. Residues 737–757 traverse the membrane as a helical segment; the sequence is AIAILLDFLLQITAFVALMAI. Over 758 to 815 the chain is Extracellular; it reads DEKRYLDGRLDMLCCVKSGGKKINDEDGDGVDRPKEVGLLETLFKNFYSPFLLSKPVK. Residues 816–836 form a helical membrane-spanning segment; that stretch reads VSVLLIFTVITCLSLMVTPSI. At 837–857 the chain is on the cytoplasmic side; that stretch reads EKGLDQEMSMPKNSHVVKYFR. Residues 858–878 form a helical membrane-spanning segment; that stretch reads YMVDLLAMGAPVYWVLKPGLN. The Extracellular portion of the chain corresponds to 879-1079; that stretch reads YSEPLQQNLI…EQYLTIWGDA (201 aa). A disulfide bridge links C889 with C894. N-linked (GlcNAc...) asparagine glycosylation is found at N896 and N939. Cystine bridges form between C935–C990, C936–C958, and C946–C955. A helical membrane pass occupies residues 1080-1100; that stretch reads MFSLGMSLVAIFLVTLLITGL. The Cytoplasmic portion of the chain corresponds to 1101–1105; it reads DITST. Residues 1106-1126 traverse the membrane as a helical segment; that stretch reads FIVLFMVICILINMLGMMWAW. Residues 1127-1132 are Extracellular-facing; sequence SINLNA. Residues 1133–1153 form a helical membrane-spanning segment; it reads ISLVNLVVCVGIGVEFVAHIV. Over 1154 to 1174 the chain is Cytoplasmic; it reads RSFKRAEGTAQERARHSLNVT. Residues 1175–1195 form a helical membrane-spanning segment; the sequence is GSSVLSGITLTKFAGIVVLGF. At 1196-1207 the chain is on the extracellular side; it reads SNSQIFQVFYFR. A helical membrane pass occupies residues 1208-1228; that stretch reads MYLGIVLIGAAHGLILLPVLL. The Cytoplasmic portion of the chain corresponds to 1229–1254; sequence SLLGPPQKLARSSGAEPTASITITTN.

Belongs to the patched family. Expressed in the midgut.

It is found in the cell membrane. The catalysed reaction is cholesterol(in) = cholesterol(out). Its function is as follows. Important for cholesterol absorption at the midgut epithelium. Acts only in the early steps of sterol absorption, prior to Npc1a-dependent intracellular sterol trafficking. The protein is NPC intracellular cholesterol transporter 1 homolog 1b of Drosophila melanogaster (Fruit fly).